Here is a 389-residue protein sequence, read N- to C-terminus: Chalcone synthase 1 (389 aa).

The active site involves Cys-164.

It belongs to the thiolase-like superfamily. Chalcone/stilbene synthases family.

The enzyme catalyses (E)-4-coumaroyl-CoA + 3 malonyl-CoA + 3 H(+) = 2',4,4',6'-tetrahydroxychalcone + 3 CO2 + 4 CoA. Its pathway is secondary metabolite biosynthesis; flavonoid biosynthesis. Functionally, the primary product of this enzyme is 4,2',4',6'-tetrahydroxychalcone (also termed naringenin-chalcone or chalcone) which can under specific conditions spontaneously isomerize into naringenin. This is Chalcone synthase 1 (CHS1) from Medicago sativa (Alfalfa).